A 113-amino-acid chain; its full sequence is Large ribosomal subunit protein uL22 (113 aa).

It belongs to the universal ribosomal protein uL22 family. As to quaternary structure, part of the 50S ribosomal subunit.

Its function is as follows. This protein binds specifically to 23S rRNA; its binding is stimulated by other ribosomal proteins, e.g. L4, L17, and L20. It is important during the early stages of 50S assembly. It makes multiple contacts with different domains of the 23S rRNA in the assembled 50S subunit and ribosome. The globular domain of the protein is located near the polypeptide exit tunnel on the outside of the subunit, while an extended beta-hairpin is found that lines the wall of the exit tunnel in the center of the 70S ribosome. The protein is Large ribosomal subunit protein uL22 of Opitutus terrae (strain DSM 11246 / JCM 15787 / PB90-1).